A 263-amino-acid polypeptide reads, in one-letter code: Tryptophan synthase alpha chain (263 aa).

Active-site proton acceptor residues include glutamate 49 and aspartate 60.

This sequence belongs to the TrpA family. In terms of assembly, tetramer of two alpha and two beta chains.

The catalysed reaction is (1S,2R)-1-C-(indol-3-yl)glycerol 3-phosphate + L-serine = D-glyceraldehyde 3-phosphate + L-tryptophan + H2O. Its pathway is amino-acid biosynthesis; L-tryptophan biosynthesis; L-tryptophan from chorismate: step 5/5. Functionally, the alpha subunit is responsible for the aldol cleavage of indoleglycerol phosphate to indole and glyceraldehyde 3-phosphate. This Cereibacter sphaeroides (strain KD131 / KCTC 12085) (Rhodobacter sphaeroides) protein is Tryptophan synthase alpha chain.